The following is a 520-amino-acid chain: Lysine--tRNA ligase (520 aa).

Residues 1 to 21 (MSDHLIPSIPTPAAAPAAAPA) form a disordered region. A compositionally biased stretch (low complexity) spans 12–21 (PAAAPAAAPA). Mg(2+) contacts are provided by glutamate 430 and glutamate 437.

It belongs to the class-II aminoacyl-tRNA synthetase family. As to quaternary structure, homodimer. The cofactor is Mg(2+).

Its subcellular location is the cytoplasm. It carries out the reaction tRNA(Lys) + L-lysine + ATP = L-lysyl-tRNA(Lys) + AMP + diphosphate. This is Lysine--tRNA ligase from Variovorax paradoxus (strain S110).